The primary structure comprises 91 residues: Insertion element IS1 1 protein InsA (91 aa).

This sequence belongs to the IS1 elements InsA family.

Its function is as follows. Absolutely required for transposition of IS1. This is Insertion element IS1 1 protein InsA (insA1) from Escherichia coli (strain K12).